A 309-amino-acid chain; its full sequence is Glutaminase (309 aa).

Positions 64, 114, 160, 167, 191, 243, and 261 each coordinate substrate.

This sequence belongs to the glutaminase family. In terms of assembly, homotetramer.

It catalyses the reaction L-glutamine + H2O = L-glutamate + NH4(+). This Methylorubrum extorquens (strain CM4 / NCIMB 13688) (Methylobacterium extorquens) protein is Glutaminase.